The sequence spans 259 residues: L-cystine import ATP-binding protein TcyN (259 aa).

The ABC transporter domain occupies 2 to 239 (IEIKNIHKQF…TKKDRTRQFL (238 aa)). Residue 34–41 (GPSGSGKT) coordinates ATP.

The protein belongs to the ABC transporter superfamily. L-cystine importer (TC 3.A.1.3.13) family. The complex is composed of two ATP-binding proteins (TcyN), two transmembrane proteins (TcyL and TcyM) and two solute-binding proteins (TcyJ and TcyK).

The protein localises to the cell membrane. Its function is as follows. Part of the ABC transporter complex TcyJKLMN involved in L-cystine import. Responsible for energy coupling to the transport system. Is also involved in cystathionine, djenkolate, and S-methylcysteine transport. This is L-cystine import ATP-binding protein TcyN (tcyN) from Bacillus subtilis (strain 168).